Reading from the N-terminus, the 700-residue chain is Lutropin-choriogonadotropic hormone receptor (700 aa).

The N-terminal stretch at 1-26 is a signal peptide; the sequence is MGRRVPALRQLLVLAMLVLKQSQLHS. At 27–362 the chain is on the extracellular side; sequence PELSGSRCPE…AFNPCEDIMG (336 aa). An LRR 1 repeat occupies 52–75; the sequence is RAGLARLSLTYLPVKVIPSQAFRG. Asparagine 103 carries N-linked (GlcNAc...) asparagine glycosylation. 3 LRR repeats span residues 126 to 150, 176 to 200, and 225 to 248; these read LPRL…KISS, MNNE…AFNG, and ATGP…GLES. 2 N-linked (GlcNAc...) asparagine glycosylation sites follow: asparagine 178 and asparagine 199. Residues asparagine 295, asparagine 303, and asparagine 317 are each glycosylated (N-linked (GlcNAc...) asparagine). Residue tyrosine 335 is modified to Sulfotyrosine. A helical transmembrane segment spans residues 363 to 390; sequence YAFLRVLIWLINILAIFGNLTVLFVLLT. At 391-399 the chain is on the cytoplasmic side; sequence SRYKLTVPR. Residues 400 to 422 traverse the membrane as a helical segment; that stretch reads FLMCNLSFADFCMGLYLLLIASV. At 423 to 443 the chain is on the extracellular side; it reads DSQTKGQYYNHAIDWQTGSGC. Cysteine 443 and cysteine 518 form a disulfide bridge. A helical transmembrane segment spans residues 444 to 466; that stretch reads SAAGFFTVFASELSVYTLTVITL. Residues 467 to 486 lie on the Cytoplasmic side of the membrane; the sequence is ERWHTITYAVQLDQKLRLRH. A helical membrane pass occupies residues 487 to 509; sequence AIPIMLGGWIFSTLMATLPLVGV. Residues 510-529 are Extracellular-facing; the sequence is SSYMKVSICLPMDVESTLSQ. Residues 530–551 form a helical membrane-spanning segment; sequence VYILSILLLNAVAFVVICACYV. At 552 to 574 the chain is on the cytoplasmic side; sequence RIYFAVQNPELTAPNKDTKIAKK. Residues 575–598 form a helical membrane-spanning segment; that stretch reads MAILIFTDFTCMAPISFFAISAAF. Residues 599 to 609 lie on the Extracellular side of the membrane; it reads KVPLITVTNSK. The helical transmembrane segment at 610-631 threads the bilayer; it reads VLLVLFYPVNSCANPFLYAVFT. Residues 632–700 are Cytoplasmic-facing; sequence KAFQRDFFLL…QPTPPRVLIQ (69 aa). S-palmitoyl cysteine attachment occurs at residues cysteine 647 and cysteine 648.

This sequence belongs to the G-protein coupled receptor 1 family. FSH/LSH/TSH subfamily. Sulfated.

It is found in the cell membrane. Receptor for lutropin-choriogonadotropic hormone. The activity of this receptor is mediated by G proteins which activate adenylate cyclase. This chain is Lutropin-choriogonadotropic hormone receptor (Lhcgr), found in Mus musculus (Mouse).